A 103-amino-acid polypeptide reads, in one-letter code: Cycloviolacin-O9 (103 aa).

An N-terminal signal peptide occupies residues 1–9 (AAFALPAFA). Positions 10–69 (SFEKDVITPAALEAVLNRKAPLYNIMMENDAILNVIANVKTVISNPVLEEALLKTNHGVN) are excised as a propeptide. A cross-link (cyclopeptide (Gly-Asn)) is located at residues 70–99 (GIPCGESCVWIPCLTSAVGCSCKSKVCYRN). Intrachain disulfides connect Cys-73–Cys-89, Cys-77–Cys-91, and Cys-82–Cys-96. A propeptide spanning residues 100–103 (SLDN) is cleaved from the precursor.

Post-translationally, this is a cyclic peptide.

Functionally, probably participates in a plant defense mechanism. The polypeptide is Cycloviolacin-O9 (Viola biflora (Yellow wood violet)).